The sequence spans 186 residues: ATP synthase subunit delta (186 aa).

It belongs to the ATPase delta chain family. As to quaternary structure, F-type ATPases have 2 components, F(1) - the catalytic core - and F(0) - the membrane proton channel. F(1) has five subunits: alpha(3), beta(3), gamma(1), delta(1), epsilon(1). F(0) has three main subunits: a(1), b(2) and c(10-14). The alpha and beta chains form an alternating ring which encloses part of the gamma chain. F(1) is attached to F(0) by a central stalk formed by the gamma and epsilon chains, while a peripheral stalk is formed by the delta and b chains.

It is found in the cell inner membrane. F(1)F(0) ATP synthase produces ATP from ADP in the presence of a proton or sodium gradient. F-type ATPases consist of two structural domains, F(1) containing the extramembraneous catalytic core and F(0) containing the membrane proton channel, linked together by a central stalk and a peripheral stalk. During catalysis, ATP synthesis in the catalytic domain of F(1) is coupled via a rotary mechanism of the central stalk subunits to proton translocation. Functionally, this protein is part of the stalk that links CF(0) to CF(1). It either transmits conformational changes from CF(0) to CF(1) or is implicated in proton conduction. This chain is ATP synthase subunit delta, found in Nitrobacter winogradskyi (strain ATCC 25391 / DSM 10237 / CIP 104748 / NCIMB 11846 / Nb-255).